The following is a 107-amino-acid chain: UPF0145 protein Memar_1285 (107 aa).

The protein belongs to the UPF0145 family.

This is UPF0145 protein Memar_1285 from Methanoculleus marisnigri (strain ATCC 35101 / DSM 1498 / JR1).